Here is a 165-residue protein sequence, read N- to C-terminus: Minor capsid protein VP2 (165 aa).

The protein belongs to the sapovirus VP2 family. In terms of assembly, homooligomer. The portal-like structure consists in 12 copies of VP2. Interacts with capsid protein VP1.

Its subcellular location is the virion. It is found in the host cytoplasm. Functionally, minor structural protein that forms a portal-like structure at a unique three-fold axis of symmetry, following binding to the host receptor. The channel formed by VP2 may allow the delivery of the viral genome through the host endosomal membrane. The chain is Minor capsid protein VP2 from Homo sapiens (Human).